A 152-amino-acid chain; its full sequence is ESAT-6 secretion machinery protein EssA (152 aa).

The Cytoplasmic segment spans residues 1–114; the sequence is MLMNSVIALT…PYIQNKQEKK (114 aa). Residues 115-135 form a helical membrane-spanning segment; that stretch reads IFPYILMSVGAFLTLGFVIFS. Residues 136 to 152 lie on the Extracellular side of the membrane; that stretch reads IHKGRRTKNESARKSNI.

This sequence belongs to the EssA family.

It localises to the cell membrane. Functionally, component of the ESAT-6 secretion system (Ess). Required for the secretion of EsxA. The chain is ESAT-6 secretion machinery protein EssA from Staphylococcus aureus (strain MRSA252).